Reading from the N-terminus, the 78-residue chain is MTQSEIQFTEAFLIFENLKQTYGLSSTQLVFDLPEDKQIEFQKEFQRLVYPRQRAFHAIIKTTNKDGKSVISRCTIEI.

This is an uncharacterized protein from Enterobacteria phage RB51 (Bacteriophage RB51).